A 356-amino-acid chain; its full sequence is uncharacterized protein (356 aa).

A helical membrane pass occupies residues 8 to 28; sequence ILGFVLFVLGAAIFLTEVMHS.

The protein to C.elegans C41C4.1 and C18B2.1.

It is found in the membrane. This is an uncharacterized protein from Caenorhabditis elegans.